The following is a 318-amino-acid chain: NADH-ubiquinone oxidoreductase chain 1 (318 aa).

The next 8 membrane-spanning stretches (helical) occupy residues 2 to 22 (FMVNLLMLVIPVMLAMAFLTL), 71 to 91 (YIIAPTLALSIALIMWTPLPI), 98 to 118 (INLGVLFILATSSLAVYSILW), 146 to 166 (LAIILLCILLMSGSFTLSTLI), 171 to 191 (HTWLLLPSWPLAMMWFISTLA), 222 to 242 (LFFMAEYTNIIMMNALTATIF), 253 to 273 (EFFSINFTLKTLLLTTIFLWV), and 294 to 314 (LPLTLAMCMWHTALPIFLANI).

It belongs to the complex I subunit 1 family.

It is found in the mitochondrion inner membrane. The enzyme catalyses a ubiquinone + NADH + 5 H(+)(in) = a ubiquinol + NAD(+) + 4 H(+)(out). Functionally, core subunit of the mitochondrial membrane respiratory chain NADH dehydrogenase (Complex I) that is believed to belong to the minimal assembly required for catalysis. Complex I functions in the transfer of electrons from NADH to the respiratory chain. The immediate electron acceptor for the enzyme is believed to be ubiquinone. The sequence is that of NADH-ubiquinone oxidoreductase chain 1 (MT-ND1) from Nycticebus coucang (Slow loris).